A 118-amino-acid polypeptide reads, in one-letter code: MSGTRPAARRTNLTAAQNVVRSVDAEERIAWVSKALCRTTDPDELFVRGAAQRKAAVICRHCPVMQECAADALDNKVEFGVWGGMTERQRRALLKQHPEVVSWSDYLEKRKRRTGTAG.

In terms of domain architecture, 4Fe-4S Wbl-type spans 36–92 (LCRTTDPDELFVRGAAQRKAAVICRHCPVMQECAADALDNKVEFGVWGGMTERQRRA). Residues Cys37, Cys59, Cys62, and Cys68 each coordinate [4Fe-4S] cluster. 2 disulfides stabilise this stretch: Cys37/Cys68 and Cys59/Cys62.

The protein belongs to the WhiB family. It depends on [4Fe-4S] cluster as a cofactor. The Fe-S cluster can be nitrosylated by nitric oxide (NO). Post-translationally, upon Fe-S cluster removal intramolecular disulfide bonds are formed.

It localises to the cytoplasm. Functionally, acts as a transcriptional regulator. Probably redox-responsive. The apo- but not holo-form probably binds DNA. This chain is Transcriptional regulator WhiB4 (whiB4), found in Mycobacterium tuberculosis (strain CDC 1551 / Oshkosh).